The primary structure comprises 77 residues: U8-lycotoxin-Ls1t (77 aa).

The first 20 residues, 1-20, serve as a signal peptide directing secretion; that stretch reads MKLIIFTGLVLFAIVSLIEA. Residues 21 to 26 constitute a propeptide that is removed on maturation; sequence QAENEK.

This sequence belongs to the neurotoxin 19 (CSTX) family. 08 (U8-Lctx) subfamily. In terms of processing, contains 4 disulfide bonds. Expressed by the venom gland.

The protein resides in the secreted. The chain is U8-lycotoxin-Ls1t from Lycosa singoriensis (Wolf spider).